We begin with the raw amino-acid sequence, 242 residues long: Coat protein (242 aa).

A compositionally biased stretch (pro residues) spans Met1–Asn16. Disordered regions lie at residues Met1–Gln41 and Ser219–Ala242. A compositionally biased stretch (polar residues) spans Ser219 to Thr232.

Belongs to the potexvirus capsid protein family.

The protein localises to the virion. In terms of biological role, required for genome encapsidation. Forms ribonucleoprotein complexes along with TGB1 helicase and viral RNA. The polypeptide is Coat protein (Strawberry mild yellow edge-associated virus (SMYEaV)).